A 723-amino-acid chain; its full sequence is Polyribonucleotide nucleotidyltransferase (723 aa).

Positions 487 and 493 each coordinate Mg(2+). The 60-residue stretch at Pro-554 to Ile-613 folds into the KH domain. An S1 motif domain is found at Gly-623–Lys-691. The interval Gly-702 to Pro-723 is disordered. Residues Lys-711–Pro-723 show a composition bias toward basic residues.

Belongs to the polyribonucleotide nucleotidyltransferase family. Requires Mg(2+) as cofactor.

The protein localises to the cytoplasm. It catalyses the reaction RNA(n+1) + phosphate = RNA(n) + a ribonucleoside 5'-diphosphate. In terms of biological role, involved in mRNA degradation. Catalyzes the phosphorolysis of single-stranded polyribonucleotides processively in the 3'- to 5'-direction. The sequence is that of Polyribonucleotide nucleotidyltransferase from Geobacillus kaustophilus (strain HTA426).